We begin with the raw amino-acid sequence, 267 residues long: Proteasome assembly chaperone 2 (267 aa).

This sequence belongs to the PSMG2 family. In terms of assembly, component of the 20S proteasome chaperone. Forms a heterodimer with PBA1 that binds to proteasome precursors.

Its subcellular location is the cytoplasm. Functionally, involved in 20S proteasome assembly. Required for maximal proteasome activity. Affects the chymotrypsin-like activity of the proteasome. Can be degraded by the proteasome. Involved in the endoplasmic reticulum-associated degradation (ERAD). In Saccharomyces cerevisiae (strain ATCC 204508 / S288c) (Baker's yeast), this protein is Proteasome assembly chaperone 2 (ADD66).